We begin with the raw amino-acid sequence, 336 residues long: Phenylalanine--tRNA ligase alpha subunit (336 aa).

Residue Glu-255 participates in Mg(2+) binding.

It belongs to the class-II aminoacyl-tRNA synthetase family. Phe-tRNA synthetase alpha subunit type 1 subfamily. Tetramer of two alpha and two beta subunits. The cofactor is Mg(2+).

It is found in the cytoplasm. The enzyme catalyses tRNA(Phe) + L-phenylalanine + ATP = L-phenylalanyl-tRNA(Phe) + AMP + diphosphate + H(+). The chain is Phenylalanine--tRNA ligase alpha subunit from Gemmatimonas aurantiaca (strain DSM 14586 / JCM 11422 / NBRC 100505 / T-27).